A 197-amino-acid chain; its full sequence is MKLIVGMTGATGAPLGVALLQALREMPNVETHLVMSKWAKTTIELETPYSARDVAALADFSHNPADQAAIISSGSFRTDGMIVIPCSMKTLAGIRAGYADGLVGRAADVVLKEGRKLVLVPREMPLSTIHLENMLALSRMGVAMVPPMPAFYNHPETVDDIVHHVVARVLDQFGLEHPHARRWQGLPQARNFSQENE.

Residues 9-11 (GAT), serine 36, 87-90 (SMKT), and arginine 122 each bind FMN.

This sequence belongs to the UbiX/PAD1 family. YclB subfamily. In terms of assembly, homododecamer.

The enzyme catalyses dimethylallyl phosphate + FMNH2 = prenylated FMNH2 + phosphate. Functionally, flavin prenyltransferase that catalyzes the synthesis of the prenylated FMN cofactor (prenyl-FMN) for phenolic acid decarboxylase C. Involved in the decarboxylation and detoxification of phenolic derivatives under both aerobic and anaerobic conditions. The protein is Probable UbiX-like flavin prenyltransferase (ecdB) of Escherichia coli.